Here is a 90-residue protein sequence, read N- to C-terminus: DNA-binding protein HU-alpha (90 aa).

This sequence belongs to the bacterial histone-like protein family. Heterodimer of an alpha and a beta chain.

Histone-like DNA-binding protein which is capable of wrapping DNA to stabilize it, and thus to prevent its denaturation under extreme environmental conditions. In Vibrio proteolyticus (Aeromonas proteolytica), this protein is DNA-binding protein HU-alpha (hupA).